Here is a 140-residue protein sequence, read N- to C-terminus: ATP synthase epsilon chain (140 aa).

The protein belongs to the ATPase epsilon chain family. F-type ATPases have 2 components, CF(1) - the catalytic core - and CF(0) - the membrane proton channel. CF(1) has five subunits: alpha(3), beta(3), gamma(1), delta(1), epsilon(1). CF(0) has three main subunits: a, b and c.

The protein resides in the cell inner membrane. Its function is as follows. Produces ATP from ADP in the presence of a proton gradient across the membrane. The polypeptide is ATP synthase epsilon chain (Neisseria meningitidis serogroup B (strain ATCC BAA-335 / MC58)).